A 421-amino-acid chain; its full sequence is Replication-associated recombination protein A (421 aa).

Residue 45–52 (GPPGIGKT) participates in ATP binding.

It belongs to the AAA ATPase family. RarA/MGS1/WRNIP1 subfamily. As to quaternary structure, homotetramer. Interacts with single-stranded binding protein SsbA. May interact with PriA.

The protein resides in the cytoplasm. It localises to the nucleoid. SsDNA-dependent ATP hydrolysis is stimulated by single-stranded binding protein SsbA but not by SsbB; in the presence of SsbB, ssDNA secondary structure is removed and RarA's ATPase activity is decreased. The C-terminal 9 residues of SsbA are sufficient to stimulate ATPase activity. Plays a role in recombination-dependent DNA replication. Positively affects the formation of RecA threads during response to DNA damage, directly or indirectly counteracting the negative RecA modulators RecX and RecU. Stabilizes a RecA-ssDNA complex. In vitro, in the presence of SsbA, inhibits PriA-dependent DNA replication restart of both leading and lagging strands; elongation is insensitive to RarA. Plays a role in response to DNA damage, localizes to the replication fork but also to DNA elsewhere in the cell. Probably required for repair of single-stranded nicks generated by H(2)O(2). Epistatic to RecA, partially represses deletions of the error-prone translesion DNA polymerases (dinB1 and dinB2), genetically interacts with replicative helicase loaders dnaB and dnaD. Epistatic to recF and recO mutations upon DNA damage. A DNA-dependent ATPase stimulated by hairpin structures in circular single-stranded (ss)DNA or ssDNA-dsDNA junctions, by blunt end and 5'-tailed dsDNA and by single-stranded binding protein SsbA protein bound to ssDNA. Preferentially binds ssDNA and replication-fork structures; SsbA stimulates binding to ssDNA. Addition of ATP to the protein has no visible effect in vitro. The protein is Replication-associated recombination protein A of Bacillus subtilis (strain 168).